A 185-amino-acid chain; its full sequence is MLNSVYDAQKSDCNKALNALKRDFSTLRTGKVSVKILENIFVDYYDNQTPLNQVATVLATDATTISVTPWEKSMLKGIESAIAAANIGVNPTNDGESVKLFFPPMTTEQRKENAKKAKAMGEKAKVSIRNIRKDANDGVKKLEKDKSISEDEAKKAYDEVQKITDNFIEKIDEAVKNKEEELLKV.

Belongs to the RRF family.

Its subcellular location is the cytoplasm. Responsible for the release of ribosomes from messenger RNA at the termination of protein biosynthesis. May increase the efficiency of translation by recycling ribosomes from one round of translation to another. The sequence is that of Ribosome-recycling factor from Campylobacter hominis (strain ATCC BAA-381 / DSM 21671 / CCUG 45161 / LMG 19568 / NCTC 13146 / CH001A).